Here is a 181-residue protein sequence, read N- to C-terminus: MRVVLLGPPGAGKGTQAQLISEKFGIPQISTGDLFRSNISEGTELGLQAKQYLDAGDLVPSEVTNKMVEARLDEPDAAAGFILDGFPRTVDQADALAAMEEARGVTIDAVLEFRVPVEELVQRLLGRGRADDTEDIIRNRLNVYRDETAPLLEYYQNVLQTIDAVGTVDEVFARTSQALGR.

ATP is bound at residue 10–15; sequence GAGKGT. The NMP stretch occupies residues 30–59; the sequence is STGDLFRSNISEGTELGLQAKQYLDAGDLV. AMP-binding positions include threonine 31, arginine 36, 57-59, 85-88, and glutamine 92; these read DLV and GFPR. The tract at residues 126–132 is LID; the sequence is GRGRADD. Arginine 127 contacts ATP. AMP contacts are provided by arginine 129 and arginine 140. An ATP-binding site is contributed by glycine 166.

This sequence belongs to the adenylate kinase family. In terms of assembly, monomer.

The protein localises to the cytoplasm. The enzyme catalyses AMP + ATP = 2 ADP. It participates in purine metabolism; AMP biosynthesis via salvage pathway; AMP from ADP: step 1/1. In terms of biological role, catalyzes the reversible transfer of the terminal phosphate group between ATP and AMP. Plays an important role in cellular energy homeostasis and in adenine nucleotide metabolism. The chain is Adenylate kinase from Mycobacteroides abscessus (strain ATCC 19977 / DSM 44196 / CCUG 20993 / CIP 104536 / JCM 13569 / NCTC 13031 / TMC 1543 / L948) (Mycobacterium abscessus).